The primary structure comprises 431 residues: Glutamate--tRNA ligase 1 (431 aa).

Residues 6–16 (PSPTGDMHIGN) carry the 'HIGH' region motif. Positions 235 to 239 (KMSKR) match the 'KMSKS' region motif. Residue Lys-238 participates in ATP binding.

It belongs to the class-I aminoacyl-tRNA synthetase family. Glutamate--tRNA ligase type 1 subfamily. As to quaternary structure, monomer.

The protein resides in the cytoplasm. The catalysed reaction is tRNA(Glu) + L-glutamate + ATP = L-glutamyl-tRNA(Glu) + AMP + diphosphate. In terms of biological role, catalyzes the attachment of glutamate to tRNA(Glu) in a two-step reaction: glutamate is first activated by ATP to form Glu-AMP and then transferred to the acceptor end of tRNA(Glu). This Campylobacter jejuni subsp. jejuni serotype O:6 (strain 81116 / NCTC 11828) protein is Glutamate--tRNA ligase 1.